The sequence spans 197 residues: Holliday junction branch migration complex subunit RuvA (197 aa).

Positions 1–63 (MFEYLNGKLV…EDAHSLYGFV (63 aa)) are domain I. A domain II region spans residues 64–142 (NEAEKALFLR…ATGTVGISLL (79 aa)). The tract at residues 142-146 (LDAGP) is flexible linker. The interval 147–197 (AGNLALEEAIEALQALGYKATELKKIEKKLAQETGLTSEEYIKSALKLMMK) is domain III.

Belongs to the RuvA family. Homotetramer. Forms an RuvA(8)-RuvB(12)-Holliday junction (HJ) complex. HJ DNA is sandwiched between 2 RuvA tetramers; dsDNA enters through RuvA and exits via RuvB. An RuvB hexamer assembles on each DNA strand where it exits the tetramer. Each RuvB hexamer is contacted by two RuvA subunits (via domain III) on 2 adjacent RuvB subunits; this complex drives branch migration. In the full resolvosome a probable DNA-RuvA(4)-RuvB(12)-RuvC(2) complex forms which resolves the HJ.

Its subcellular location is the cytoplasm. The RuvA-RuvB-RuvC complex processes Holliday junction (HJ) DNA during genetic recombination and DNA repair, while the RuvA-RuvB complex plays an important role in the rescue of blocked DNA replication forks via replication fork reversal (RFR). RuvA specifically binds to HJ cruciform DNA, conferring on it an open structure. The RuvB hexamer acts as an ATP-dependent pump, pulling dsDNA into and through the RuvAB complex. HJ branch migration allows RuvC to scan DNA until it finds its consensus sequence, where it cleaves and resolves the cruciform DNA. This Lactococcus lactis subsp. lactis (strain IL1403) (Streptococcus lactis) protein is Holliday junction branch migration complex subunit RuvA.